Consider the following 287-residue polypeptide: ATP synthase gamma chain (287 aa).

This sequence belongs to the ATPase gamma chain family. As to quaternary structure, F-type ATPases have 2 components, CF(1) - the catalytic core - and CF(0) - the membrane proton channel. CF(1) has five subunits: alpha(3), beta(3), gamma(1), delta(1), epsilon(1). CF(0) has three main subunits: a, b and c.

The protein resides in the cell inner membrane. Its function is as follows. Produces ATP from ADP in the presence of a proton gradient across the membrane. The gamma chain is believed to be important in regulating ATPase activity and the flow of protons through the CF(0) complex. In Xylella fastidiosa (strain M12), this protein is ATP synthase gamma chain.